The following is a 316-amino-acid chain: Porphobilinogen deaminase (316 aa).

Position 249 is an S-(dipyrrolylmethanemethyl)cysteine (C249).

The protein belongs to the HMBS family. Monomer. Dipyrromethane serves as cofactor.

It catalyses the reaction 4 porphobilinogen + H2O = hydroxymethylbilane + 4 NH4(+). Its pathway is porphyrin-containing compound metabolism; protoporphyrin-IX biosynthesis; coproporphyrinogen-III from 5-aminolevulinate: step 2/4. Functionally, tetrapolymerization of the monopyrrole PBG into the hydroxymethylbilane pre-uroporphyrinogen in several discrete steps. The sequence is that of Porphobilinogen deaminase from Nitrobacter winogradskyi (strain ATCC 25391 / DSM 10237 / CIP 104748 / NCIMB 11846 / Nb-255).